A 345-amino-acid polypeptide reads, in one-letter code: Molybdate/tungstate import ATP-binding protein WtpC (345 aa).

The 230-residue stretch at 2–231 (LKVESISKDY…PKSEEVARFL (230 aa)) folds into the ABC transporter domain. Residue 33 to 40 (GPSGSGKT) coordinates ATP. A Mop domain is found at 280–345 (KTSARNVFKA…FKASAIHVFP (66 aa)).

The protein belongs to the ABC transporter superfamily. Sulfate/tungstate importer (TC 3.A.1.6) family. The complex is composed of two ATP-binding proteins (WtpC), two transmembrane proteins (WtpB) and a solute-binding protein (WtpA).

It is found in the cell membrane. It carries out the reaction tungstate(in) + ATP + H2O = tungstate(out) + ADP + phosphate + H(+). Functionally, part of the ABC transporter complex WtpABC involved in molybdate/tungstate import. Responsible for energy coupling to the transport system. In Pyrococcus horikoshii (strain ATCC 700860 / DSM 12428 / JCM 9974 / NBRC 100139 / OT-3), this protein is Molybdate/tungstate import ATP-binding protein WtpC (wtpC).